A 299-amino-acid chain; its full sequence is Plant-type L-asparaginase (299 aa).

T169 functions as the Nucleophile in the catalytic mechanism. Residues 197 to 200 (RVGD) and 220 to 223 (TGVG) each bind substrate.

The protein belongs to the Ntn-hydrolase family. In terms of assembly, heterotetramer of two alpha and two beta chains arranged as a dimer of alpha/beta heterodimers. The uncleaved protein forms homodimers. In terms of processing, autocleaved. Generates the alpha and beta subunits. The N-terminal residue of the beta subunit is thought to be responsible for the nucleophile hydrolase activity.

The enzyme catalyses L-asparagine + H2O = L-aspartate + NH4(+). With respect to regulation, divalent metal ions and EDTA do not have significant effect on enzyme activity, indicating that activity is metal-independent. Functionally, catalyzes the hydrolysis of L-asparagine into L-aspartate and ammonia. Also displays D-asparaginase activity, which is about 20% of the L-asparaginase activity. Does not exhibit glutaminase activity. The protein is Plant-type L-asparaginase of Pyrobaculum calidifontis (strain DSM 21063 / JCM 11548 / VA1).